The primary structure comprises 221 residues: Octanoyltransferase (221 aa).

The BPL/LPL catalytic domain maps to 35 to 221 (ESYENRIIFC…RELLAALLSK (187 aa)). Residues 80–87 (RGGDITYH), 152–154 (AIG), and 165–167 (GLA) each bind substrate. The active-site Acyl-thioester intermediate is cysteine 183.

Belongs to the LipB family.

It localises to the cytoplasm. It catalyses the reaction octanoyl-[ACP] + L-lysyl-[protein] = N(6)-octanoyl-L-lysyl-[protein] + holo-[ACP] + H(+). It functions in the pathway protein modification; protein lipoylation via endogenous pathway; protein N(6)-(lipoyl)lysine from octanoyl-[acyl-carrier-protein]: step 1/2. Catalyzes the transfer of endogenously produced octanoic acid from octanoyl-acyl-carrier-protein onto the lipoyl domains of lipoate-dependent enzymes. Lipoyl-ACP can also act as a substrate although octanoyl-ACP is likely to be the physiological substrate. In Bacteroides fragilis (strain YCH46), this protein is Octanoyltransferase.